The following is a 340-amino-acid chain: Probable allantoicase (340 aa).

The protein belongs to the allantoicase family.

The enzyme catalyses allantoate + H2O = (S)-ureidoglycolate + urea. It functions in the pathway nitrogen metabolism; (S)-allantoin degradation; (S)-ureidoglycolate from allantoate (aminidohydrolase route): step 1/1. In Rhizobium meliloti (strain 1021) (Ensifer meliloti), this protein is Probable allantoicase.